Consider the following 157-residue polypeptide: Probable calcium-binding protein CML15 (157 aa).

4 EF-hand domains span residues Asp3–Lys38, Pro39–Glu74, Ile78–Pro113, and Leu114–Asp149. Ca(2+) contacts are provided by Asp16, Asp18, Asp20, Ser22, Glu27, Asp52, Asn54, Asn56, Glu63, Asp91, Asp93, Asn95, Glu102, Asp127, Asn129, Asp131, and Glu138.

Functionally, potential calcium sensor. The polypeptide is Probable calcium-binding protein CML15 (CML15) (Arabidopsis thaliana (Mouse-ear cress)).